The following is a 347-amino-acid chain: Guanine nucleotide-binding protein alpha-6 subunit (347 aa).

In terms of domain architecture, G-alpha spans 30-347 (GITQVLLLGA…IIVGHVMDLV (318 aa)). Residues 33–46 (QVLLLGAGESGKST) form a G1 motif region. Residues 38–45 (GAGESGKS), 172–178 (LRARVTT), 197–201 (DVGGQ), 266–269 (NKKD), and alanine 322 each bind GTP. Serine 45 and threonine 178 together coordinate Mg(2+). Positions 170-178 (DALRARVTT) are G2 motif. The segment at 193–202 (MKIIDVGGQR) is G3 motif. A G4 motif region spans residues 262 to 269 (ILFLNKKD). A G5 motif region spans residues 320–325 (TIAVDT).

The protein belongs to the G-alpha family. In terms of assembly, g proteins are composed of 3 units; alpha, beta and gamma. The alpha chain contains the guanine nucleotide binding site.

In terms of biological role, guanine nucleotide-binding proteins (G proteins) are involved as modulators or transducers in various transmembrane signaling systems. G alpha-6 is involved in the folic acid chemotaxis signal transduction pathway. This chain is Guanine nucleotide-binding protein alpha-6 subunit (gpaF), found in Dictyostelium discoideum (Social amoeba).